The chain runs to 1201 residues: Zinc finger protein sdc-1 (1201 aa).

C2H2-type zinc fingers lie at residues 117-139 (LTCA…RGVH), 145-168 (YMCQ…RTSC), 233-254 (SSCH…GNVH), 268-290 (YFCH…WRLH), 486-513 (IVCH…LLRH), 521-543 (YHCA…INDC), and 652-674 (VVCF…DYCH). The tract at residues 1164-1201 (KRRNSETREHELIELDTDDLNEPSTSDGRYSFGHHGYR) is disordered. Basic and acidic residues predominate over residues 1167-1176 (NSETREHELI).

As to quaternary structure, component of the SDC complex, which consists of sdc-1, sdc-2 and sdc-3. Within the complex, interacts with sdc-2 and sdc-3.

Its subcellular location is the nucleus. The protein localises to the chromosome. In terms of biological role, embryonic transcription factor regulating downstream genes involved specifically in the sex determination and dosage compensation pathways, or regulating other genes involved in the coordinate control of both processes. Component of the SDC complex that functions in sex determination and in X chromosome dosage compensation specifically in hermaphrodite (XX) animals. Involved in the recruitment of the condensin I-like dosage compensation complex to the male sex-determining autosomal gene her-1, thereby contributing to its repression and initiating hermaphrodite sexual development. Similarly, might contribute to X-linked gene repression through recruitment of the dosage compensation complex to the X chromosomes in hermaphrodites. Seems to be involved in the depletion of histone H4 lysine 16 acetylation (H4K16ac) on dosage compensated X chromosomes. Plays a role in developmental rate and body fat regulation downstream of the TOR complex 2 pathway. The protein is Zinc finger protein sdc-1 (sdc-1) of Caenorhabditis elegans.